The sequence spans 395 residues: Elongation factor Tu (395 aa).

Residues 10–204 (KPHVNIGTIG…NVDEYIPLPQ (195 aa)) form the tr-type G domain. The interval 19–26 (GHVDHGKT) is G1. Residue 19–26 (GHVDHGKT) participates in GTP binding. Thr-26 provides a ligand contact to Mg(2+). The segment at 60-64 (GITIN) is G2. The segment at 81–84 (DCPG) is G3. GTP is bound by residues 81–85 (DCPGH) and 136–139 (NKVD). Residues 136-139 (NKVD) are G4. The G5 stretch occupies residues 174-176 (SAL).

The protein belongs to the TRAFAC class translation factor GTPase superfamily. Classic translation factor GTPase family. EF-Tu/EF-1A subfamily. In terms of assembly, monomer.

Its subcellular location is the cytoplasm. It carries out the reaction GTP + H2O = GDP + phosphate + H(+). Functionally, GTP hydrolase that promotes the GTP-dependent binding of aminoacyl-tRNA to the A-site of ribosomes during protein biosynthesis. The polypeptide is Elongation factor Tu (Amoebophilus asiaticus (strain 5a2)).